The sequence spans 620 residues: UvrABC system protein C (620 aa).

One can recognise a GIY-YIG domain in the interval 13-92 (DKPGVYIMKN…IKKYSPRYNI (80 aa)). The region spanning 204-239 (TSIIKKLKLEMEKAAEELEFEKAAKIRDRILAIELI) is the UVR domain.

It belongs to the UvrC family. Interacts with UvrB in an incision complex.

It localises to the cytoplasm. The UvrABC repair system catalyzes the recognition and processing of DNA lesions. UvrC both incises the 5' and 3' sides of the lesion. The N-terminal half is responsible for the 3' incision and the C-terminal half is responsible for the 5' incision. The polypeptide is UvrABC system protein C (Clostridium perfringens (strain 13 / Type A)).